The chain runs to 408 residues: Dual-specificity RNA methyltransferase RlmN (408 aa).

The active-site Proton acceptor is E120. One can recognise a Radical SAM core domain in the interval 126 to 375 (EEGRGTLCIS…IRTPRGRDIL (250 aa)). The cysteines at positions 133 and 378 are disulfide-linked. Residues C140, C144, and C147 each coordinate [4Fe-4S] cluster. S-adenosyl-L-methionine contacts are provided by residues 204–205 (GE), S236, 258–260 (SLH), and N335. The S-methylcysteine intermediate role is filled by C378.

Belongs to the radical SAM superfamily. RlmN family. Requires [4Fe-4S] cluster as cofactor.

It is found in the cytoplasm. It carries out the reaction adenosine(2503) in 23S rRNA + 2 reduced [2Fe-2S]-[ferredoxin] + 2 S-adenosyl-L-methionine = 2-methyladenosine(2503) in 23S rRNA + 5'-deoxyadenosine + L-methionine + 2 oxidized [2Fe-2S]-[ferredoxin] + S-adenosyl-L-homocysteine. The enzyme catalyses adenosine(37) in tRNA + 2 reduced [2Fe-2S]-[ferredoxin] + 2 S-adenosyl-L-methionine = 2-methyladenosine(37) in tRNA + 5'-deoxyadenosine + L-methionine + 2 oxidized [2Fe-2S]-[ferredoxin] + S-adenosyl-L-homocysteine. Its function is as follows. Specifically methylates position 2 of adenine 2503 in 23S rRNA and position 2 of adenine 37 in tRNAs. m2A2503 modification seems to play a crucial role in the proofreading step occurring at the peptidyl transferase center and thus would serve to optimize ribosomal fidelity. This chain is Dual-specificity RNA methyltransferase RlmN, found in Rhizobium leguminosarum bv. trifolii (strain WSM2304).